Here is a 56-residue protein sequence, read N- to C-terminus: Small ribosomal subunit protein uS14 (56 aa).

This sequence belongs to the universal ribosomal protein uS14 family. Component of the small ribosomal subunit (SSU). Mature yeast ribosomes consist of a small (40S) and a large (60S) subunit. The 40S small subunit contains 1 molecule of ribosomal RNA (18S rRNA) and at least 33 different proteins. The large 60S subunit contains 3 rRNA molecules (25S, 5.8S and 5S rRNA) and at least 46 different proteins.

The protein resides in the cytoplasm. It is found in the nucleus. Component of the ribosome, a large ribonucleoprotein complex responsible for the synthesis of proteins in the cell. The small ribosomal subunit (SSU) binds messenger RNAs (mRNAs) and translates the encoded message by selecting cognate aminoacyl-transfer RNA (tRNA) molecules. The large subunit (LSU) contains the ribosomal catalytic site termed the peptidyl transferase center (PTC), which catalyzes the formation of peptide bonds, thereby polymerizing the amino acids delivered by tRNAs into a polypeptide chain. The nascent polypeptides leave the ribosome through a tunnel in the LSU and interact with protein factors that function in enzymatic processing, targeting, and the membrane insertion of nascent chains at the exit of the ribosomal tunnel. The chain is Small ribosomal subunit protein uS14 (rps29) from Schizosaccharomyces pombe (strain 972 / ATCC 24843) (Fission yeast).